The following is a 298-amino-acid chain: Acetylglutamate kinase (298 aa).

Substrate-binding positions include 69-70 (GG), Arg91, and Asn196.

This sequence belongs to the acetylglutamate kinase family. ArgB subfamily.

The protein resides in the cytoplasm. The catalysed reaction is N-acetyl-L-glutamate + ATP = N-acetyl-L-glutamyl 5-phosphate + ADP. It functions in the pathway amino-acid biosynthesis; L-arginine biosynthesis; N(2)-acetyl-L-ornithine from L-glutamate: step 2/4. In terms of biological role, catalyzes the ATP-dependent phosphorylation of N-acetyl-L-glutamate. The protein is Acetylglutamate kinase of Bradyrhizobium sp. (strain ORS 278).